The sequence spans 843 residues: Protein translocase subunit SecA 1 (843 aa).

Residues Gln-91, 109 to 113 (GEGKT), and Asp-498 contribute to the ATP site. Residues 799–813 (EAKHVSAEDGKEKVK) are compositionally biased toward basic and acidic residues. Residues 799–826 (EAKHVSAEDGKEKVKPKPIVKGDQVGRN) form a disordered region. Zn(2+)-binding residues include Cys-829, Cys-831, Cys-840, and His-841.

It belongs to the SecA family. Monomer and homodimer. Part of the essential Sec protein translocation apparatus which comprises SecA, SecYEG and auxiliary proteins SecDF. Other proteins may also be involved. It depends on Zn(2+) as a cofactor.

The protein localises to the cell membrane. It is found in the cytoplasm. The enzyme catalyses ATP + H2O + cellular proteinSide 1 = ADP + phosphate + cellular proteinSide 2.. In terms of biological role, part of the Sec protein translocase complex. Interacts with the SecYEG preprotein conducting channel. Has a central role in coupling the hydrolysis of ATP to the transfer of proteins into and across the cell membrane, serving as an ATP-driven molecular motor driving the stepwise translocation of polypeptide chains across the membrane. This chain is Protein translocase subunit SecA 1, found in Staphylococcus aureus (strain N315).